A 364-amino-acid polypeptide reads, in one-letter code: tRNA 2-selenouridine synthase (364 aa).

One can recognise a Rhodanese domain in the interval Leu-14 to Trp-137. Cys-97 serves as the catalytic S-selanylcysteine intermediate.

It belongs to the SelU family. Monomer.

The enzyme catalyses 5-methylaminomethyl-2-thiouridine(34) in tRNA + selenophosphate + (2E)-geranyl diphosphate + H2O + H(+) = 5-methylaminomethyl-2-selenouridine(34) in tRNA + (2E)-thiogeraniol + phosphate + diphosphate. It catalyses the reaction 5-methylaminomethyl-2-thiouridine(34) in tRNA + (2E)-geranyl diphosphate = 5-methylaminomethyl-S-(2E)-geranyl-thiouridine(34) in tRNA + diphosphate. The catalysed reaction is 5-methylaminomethyl-S-(2E)-geranyl-thiouridine(34) in tRNA + selenophosphate + H(+) = 5-methylaminomethyl-2-(Se-phospho)selenouridine(34) in tRNA + (2E)-thiogeraniol. It carries out the reaction 5-methylaminomethyl-2-(Se-phospho)selenouridine(34) in tRNA + H2O = 5-methylaminomethyl-2-selenouridine(34) in tRNA + phosphate. In terms of biological role, involved in the post-transcriptional modification of the uridine at the wobble position (U34) of tRNA(Lys), tRNA(Glu) and tRNA(Gln). Catalyzes the conversion of 2-thiouridine (S2U-RNA) to 2-selenouridine (Se2U-RNA). Acts in a two-step process involving geranylation of 2-thiouridine (S2U) to S-geranyl-2-thiouridine (geS2U) and subsequent selenation of the latter derivative to 2-selenouridine (Se2U) in the tRNA chain. This is tRNA 2-selenouridine synthase from Salmonella enteritidis.